Consider the following 223-residue polypeptide: Uracil-DNA glycosylase (223 aa).

Residue D67 is the Proton acceptor of the active site.

It belongs to the uracil-DNA glycosylase (UDG) superfamily. UNG family.

It localises to the cytoplasm. It carries out the reaction Hydrolyzes single-stranded DNA or mismatched double-stranded DNA and polynucleotides, releasing free uracil.. Excises uracil residues from the DNA which can arise as a result of misincorporation of dUMP residues by DNA polymerase or due to deamination of cytosine. This is Uracil-DNA glycosylase from Borrelia hermsii (strain HS1 / DAH).